A 279-amino-acid chain; its full sequence is MTTTRTERNFAGIGDVRIVYDVWTPDTAPQAVVVLAHGLGEHARRYDHVAQRLGAAGLVTYALDHRGHGRSGGKRVLVRDISEYTADFDTLVGIATREYPGCKRIVLGHSMGGGIVFAYGVERPDNYDLMVLSAPAVAAQDLVSPVVAVAAKLLGVVVPGLPVQELDFTAISRDPEVVQAYNTDPLVHHGRVPAGIGRALLQVGETMPRRAPALTAPLLVLHGTDDRLIPIEGSRRLVECVGSADVQLKEYPGLYHEVFNEPERNQVLDDVVAWLTERL.

Ser-110 (nucleophile) is an active-site residue. Residues Asp-226 and His-256 each act as charge relay system in the active site.

This sequence belongs to the AB hydrolase superfamily. Monomer.

The protein localises to the secreted. Its subcellular location is the cell wall. The enzyme catalyses a 1-acylglycerol + H2O = glycerol + a fatty acid + H(+). It carries out the reaction Hydrolyzes glycerol monoesters of long-chain fatty acids.. The catalysed reaction is 1-butyrylglycerol + H2O = butanoate + glycerol + H(+). It catalyses the reaction 1-octanoylglycerol + H2O = octanoate + glycerol + H(+). The enzyme catalyses 1-decanoylglycerol + H2O = decanoate + glycerol + H(+). It carries out the reaction 1-dodecanoylglycerol + H2O = dodecanoate + glycerol + H(+). The catalysed reaction is 1-tetradecanoylglycerol + H2O = tetradecanoate + glycerol + H(+). It catalyses the reaction 1-(9Z-octadecenoyl)-glycerol + H2O = glycerol + (9Z)-octadecenoate + H(+). The enzyme catalyses 2-(9Z-octadecenoyl)-glycerol + H2O = glycerol + (9Z)-octadecenoate + H(+). Inhibited by the serine esterase inhibitors PMSF (100%), E600 (80%) and THL (22%). Virtual screening identified a tautomer of ZINC13451138, known inhibitor for HIV-1 integrase, as a potential inhibitor. Its function is as follows. Involved in the hydrolysis of exogenous host lipids during chronic infection. Catalyzes the hydrolysis of both monoacylglycerols (MAG) and diacylglycerols (DAG), with a preference for MAG. It hydrolyzes 2-MAG, 1-3-MAG and MAG with short, medium and long chain fatty acids such as 1-monobutyroyl-rac-glycerol (MC4), 1-mono-octanoyl-rac-glycerol (MC8), 1-monodecanoyl-rac-glycerol (MC10), 1-monolauroyl-rac-glycerol (MC12), 1-monomyristoyl-rac-glycerol (MC14) and 1-mono-oleyl-rac-glycerol (MC18:1). Also able to hydrolyze DAG with short (DiC6) and medium (DiC10) fatty acid chains, but not with longest fatty acid chains. Can also hydrolyze vinyl laurate (VC12), vinyl butyrate (VC4) and vinyl propionate (VC3). In terms of biological role, induces an inflammatory response and cell apoptosis in the host cells. Increases expression of IL-6, NF-kappaB, TLR-2, TLR-6, TNF-alpha, and MyD88 in mouse alveolar macrophage RAW264.7 cells. Persistent expression induces RAW264.7 cell apoptosis in vitro. In Mycobacterium tuberculosis (strain ATCC 25618 / H37Rv), this protein is Monoacylglycerol lipase.